The primary structure comprises 148 residues: Cystatin-C (148 aa).

Positions 1–28 (MARSLGVPLLLLAALVVALALAVSPAAG) are cleaved as a signal peptide. A Secondary area of contact motif is present at residues 83–87 (QIVSG). Intrachain disulfides connect Cys-101-Cys-111 and Cys-125-Cys-145.

Belongs to the cystatin family.

The protein localises to the secreted. In terms of biological role, this is a thiol proteinase inhibitor. The chain is Cystatin-C (CST3) from Oryctolagus cuniculus (Rabbit).